We begin with the raw amino-acid sequence, 1653 residues long: Ciliary rootlet coiled-coil protein 2 (1653 aa).

Residues 1-17 (MSSASSEPGNGDASQQP) show a composition bias toward polar residues. Residues 1–57 (MSSASSEPGNGDASQQPLLGLDTVIQRLEDTILSPTASREDRALTVRGEGRQASPTP) form a disordered region. A compositionally biased stretch (basic and acidic residues) spans 38–50 (SREDRALTVRGEG). Coiled coils occupy residues 86-145 (VARV…SELE) and 310-351 (KVAL…LVAQ). The interval 367 to 396 (LGEPRRPLRSPQRATSPHQGASPPHICSPA) is disordered. A coiled-coil region spans residues 423–1215 (LKSSQALVAS…QRKLAEVEAA (793 aa)). The disordered stretch occupies residues 1302-1356 (GLQRQSPWASPEQPGSPTKGSDSSQALPGQQGTSPPARPHSPLRWPSPTPGGRSS). The segment covering 1304-1335 (QRQSPWASPEQPGSPTKGSDSSQALPGQQGTS) has biased composition (polar residues). The stretch at 1361 to 1570 (VATVQDILRD…QAQMTEMEQA (210 aa)) forms a coiled coil.

The protein belongs to the rootletin family.

This is Ciliary rootlet coiled-coil protein 2 from Homo sapiens (Human).